A 1203-amino-acid chain; its full sequence is Rho GTPase-activating protein gacGG (1203 aa).

RCC1 repeat units lie at residues 52-104, 106-148, 155-204, 206-255, 257-298, 299-359, and 361-410; these read TGEL…AIME, GLLY…VVAD, KRSV…AIVE, NEVF…ARSG, GNVC…VLSE, KGEI…EGRN, and LSVY…YLRG. A disordered region spans residues 316–343; that stretch reads KLDVNSSPNINSSSGTTTPTTNTTTTTK. Residues 320–343 show a composition bias toward low complexity; the sequence is NSSPNINSSSGTTTPTTNTTTTTK. The region spanning 381 to 594 is the Rho-GAP domain; the sequence is VDIAESMRRK…TIMKQYPLME (214 aa). Positions 649–679 form a coiled coil; the sequence is TLEIKNNQNNQNNQKENNNNNNNINNSNNNN. Disordered regions lie at residues 657 to 725, 746 to 789, and 831 to 852; these read NNQN…TGNI, KDGN…NLSP, and FANS…LIGS. Low complexity-rich tracts occupy residues 746 to 788 and 833 to 852; these read KDGN…PNLS and NSGS…LIGS. A coiled-coil region spans residues 995 to 1078; sequence FDLLEKSMTE…ISNQNLSRVN (84 aa).

It localises to the cytoplasm. Functionally, rho GTPase-activating protein involved in the signal transduction pathway. The protein is Rho GTPase-activating protein gacGG (gacGG) of Dictyostelium discoideum (Social amoeba).